Here is a 63-residue protein sequence, read N- to C-terminus: Arabinogalactan peptide 3 (63 aa).

An N-terminal signal peptide occupies residues 1-26 (MASRILYAAAVVAAVAVSSLAGVAYA). Serine 36 carries the GPI-anchor amidated serine lipid modification. A propeptide spans 37–63 (GAAAVSSSLVAAVLCPAVALLLGNLRQ) (removed in mature form).

This sequence belongs to the AG-peptide AGP family. O-glycosylated on hydroxyprolines; noncontiguous hydroxylproline residues are glycosylated with arabinogalactan. As to expression, expressed in roots, stems, leaves, flowers and seeds.

The protein resides in the vacuole. Its subcellular location is the aleurone grain membrane. Proteoglycan that seems to be implicated in diverse developmental roles such as differentiation, cell-cell recognition, embryogenesis and programmed cell death. This chain is Arabinogalactan peptide 3 (AGPEP3), found in Oryza sativa subsp. japonica (Rice).